Consider the following 125-residue polypeptide: MAGGVGGRVVVGRHVYGNLYGCDSRVLRDEAALITIVKEAVKVANAMLLSIGSYRFGPGGGLTVFAVVAESHISIHTWPEHGFATVDVYTCGDHTDPKAAFDYIVSQLRPKRVEVFFGDRSMYGE.

The active-site Schiff-base intermediate with substrate; via pyruvic acid is the Ser-71. Ser-71 bears the Pyruvic acid (Ser); by autocatalysis mark. The active-site Proton acceptor; for processing activity is the His-76. The active-site Proton donor; for catalytic activity is Cys-91.

It belongs to the prokaryotic AdoMetDC family. Type 1 subfamily. As to quaternary structure, heterotetramer of two alpha and two beta chains arranged as a dimer of alpha/beta heterodimers. It depends on pyruvate as a cofactor. Is synthesized initially as an inactive proenzyme. Formation of the active enzyme involves a self-maturation process in which the active site pyruvoyl group is generated from an internal serine residue via an autocatalytic post-translational modification. Two non-identical subunits are generated from the proenzyme in this reaction, and the pyruvate is formed at the N-terminus of the alpha chain, which is derived from the carboxyl end of the proenzyme. The post-translation cleavage follows an unusual pathway, termed non-hydrolytic serinolysis, in which the side chain hydroxyl group of the serine supplies its oxygen atom to form the C-terminus of the beta chain, while the remainder of the serine residue undergoes an oxidative deamination to produce ammonia and the pyruvoyl group blocking the N-terminus of the alpha chain.

It catalyses the reaction S-adenosyl-L-methionine + H(+) = S-adenosyl 3-(methylsulfanyl)propylamine + CO2. It participates in amine and polyamine biosynthesis; S-adenosylmethioninamine biosynthesis; S-adenosylmethioninamine from S-adenosyl-L-methionine: step 1/1. Its function is as follows. Catalyzes the decarboxylation of S-adenosylmethionine to S-adenosylmethioninamine (dcAdoMet), the propylamine donor required for the synthesis of the polyamines spermine and spermidine from the diamine putrescine. This chain is S-adenosylmethionine decarboxylase proenzyme, found in Pyrobaculum aerophilum (strain ATCC 51768 / DSM 7523 / JCM 9630 / CIP 104966 / NBRC 100827 / IM2).